Reading from the N-terminus, the 2372-residue chain is NBAS subunit of NRZ tethering complex (2372 aa).

2 WD repeats span residues 119–158 (DPNPHWRRVAWSHDCALLAYADSTGTVRVFDLMGSELFII) and 304–343 (GEQDGVFRMSLSPDGTILAVIHFSGSLSLWDIPSFKLRGS). The tract at residues 447–468 (LESSVKGEEDDGDDDSDSDEEA) is disordered. A compositionally biased stretch (acidic residues) spans 454–467 (EEDDGDDDSDSDEE). A coiled-coil region spans residues 629–668 (YEDFLSMEEELEQRKERESKKRQELLKKVDFSKLTLEQKE).

The protein resides in the endoplasmic reticulum. In terms of biological role, involved in Golgi-to-endoplasmic reticulum (ER) retrograde transport; the function is proposed to depend on its association in the NRZ complex which is believed to play a role in SNARE assembly at the ER. Required for normal embryonic development. May play a role in the nonsense-mediated decay pathway of mRNAs containing premature stop codons. The chain is NBAS subunit of NRZ tethering complex from Danio rerio (Zebrafish).